A 200-amino-acid chain; its full sequence is uncharacterized protein (200 aa).

The segment at 149–200 (APDPGGSVATEEVLRSDDRDSHTQDSASEWPEGNDSVGSAAMRIDLSRIGGT) is disordered. Basic and acidic residues predominate over residues 160–171 (EVLRSDDRDSHT).

To A.tumefaciens Ti plasmid conjugal transfer region I ORFR2 and ORFR3.

This is an uncharacterized protein from Sinorhizobium fredii (strain NBRC 101917 / NGR234).